The sequence spans 92 residues: Acyl-CoA-binding protein (92 aa).

Residues 3-88 (LKEDFEEHAE…VKQLLEAEAS (86 aa)) form the ACB domain. An acyl-CoA contacts are provided by residues 30-34 (YGLYK), lysine 56, and tyrosine 75.

This sequence belongs to the ACBP family.

Functionally, binds medium- and long-chain acyl-CoA esters with very high affinity and may function as an intracellular carrier of acyl-CoA esters. This chain is Acyl-CoA-binding protein, found in Brassica napus (Rape).